The sequence spans 295 residues: Protoheme IX farnesyltransferase (295 aa).

Transmembrane regions (helical) follow at residues 9-29, 36-56, 80-100, 108-128, 135-155, 163-183, 209-229, 230-250, and 265-285; these read ITKP…FFLA, FGVF…GCVF, LVSL…GVAL, LAAL…SLYL, GTLV…CAVT, LTLL…IAIF, IMLY…GGYA, GLNY…MAWK, and FVFS…DFQV.

It belongs to the UbiA prenyltransferase family. Protoheme IX farnesyltransferase subfamily.

It localises to the cell inner membrane. The catalysed reaction is heme b + (2E,6E)-farnesyl diphosphate + H2O = Fe(II)-heme o + diphosphate. The protein operates within porphyrin-containing compound metabolism; heme O biosynthesis; heme O from protoheme: step 1/1. In terms of biological role, converts heme B (protoheme IX) to heme O by substitution of the vinyl group on carbon 2 of heme B porphyrin ring with a hydroxyethyl farnesyl side group. This chain is Protoheme IX farnesyltransferase, found in Pseudomonas savastanoi pv. phaseolicola (strain 1448A / Race 6) (Pseudomonas syringae pv. phaseolicola (strain 1448A / Race 6)).